The following is an 81-amino-acid chain: Small ribosomal subunit protein uS17 (81 aa).

This sequence belongs to the universal ribosomal protein uS17 family. As to quaternary structure, part of the 30S ribosomal subunit.

Functionally, one of the primary rRNA binding proteins, it binds specifically to the 5'-end of 16S ribosomal RNA. This Hyphomonas neptunium (strain ATCC 15444) protein is Small ribosomal subunit protein uS17.